The chain runs to 369 residues: 2-aminoethylphosphonate--pyruvate transaminase 1 (369 aa).

N6-(pyridoxal phosphate)lysine is present on K191.

Belongs to the class-V pyridoxal-phosphate-dependent aminotransferase family. PhnW subfamily. As to quaternary structure, homodimer. Pyridoxal 5'-phosphate serves as cofactor.

It carries out the reaction (2-aminoethyl)phosphonate + pyruvate = phosphonoacetaldehyde + L-alanine. Involved in phosphonate degradation. This Burkholderia lata (strain ATCC 17760 / DSM 23089 / LMG 22485 / NCIMB 9086 / R18194 / 383) protein is 2-aminoethylphosphonate--pyruvate transaminase 1.